An 87-amino-acid chain; its full sequence is MKTLLLTLVVVTIVCLDLGYTRTCLISPSSTPQTCPQGQDICFLKAQCDKFCSIRGPVIEQGCVATCPQFRSNYRSLLCCTTDNCNH.

The N-terminal stretch at 1–21 (MKTLLLTLVVVTIVCLDLGYT) is a signal peptide. Intrachain disulfides connect C24–C42, C35–C63, C48–C52, C67–C79, and C80–C85.

The protein belongs to the three-finger toxin family. Long-chain subfamily. Kappa-neurotoxin sub-subfamily. Homo- and heterodimer; non-covalently linked. As to expression, expressed by the venom gland.

It is found in the secreted. Postsynaptic neurotoxin that binds and inhibits neuronal nicotinic acetylcholine receptors (nAChR) with high affinity (IC(50)&lt;100 nM). Is a selective, and slowly reversible antagonist of alpha-3/CHRNA3-containing and some alpha-4/CHRNA4-containing AChRs. The polypeptide is Kappa 1a-bungarotoxin (Bungarus candidus (Malayan krait)).